An 839-amino-acid polypeptide reads, in one-letter code: Autophagy-related protein 9A (839 aa).

A disordered region spans residues 1–20 (MAQFDTEYQRLEASYSDSPP). Ala2 bears the N-acetylalanine mark. The Cytoplasmic portion of the chain corresponds to 2 to 61 (AQFDTEYQRLEASYSDSPPGEEDLLVHVAEGSKSPWHHIENLDLFFSRVYNLHQKNGFTC). Residues 8–11 (YQRL) carry the Tyrosine-based sorting signal motif. Residues Ser14, Ser16, and Ser18 each carry the phosphoserine modification. A helical membrane pass occupies residues 62–84 (MLIGEIFELMQFLFVVAFTTFLV). The Lumenal portion of the chain corresponds to 85-128 (SCVDYDILFANKMVNHSLHPTEPVKVTLPDAFLPAQVCSARIQE). Asn99 carries an N-linked (GlcNAc...) asparagine glycan. A helical membrane pass occupies residues 129–154 (NGSLITILVIAGVFWIHRLIKFIYNI). At 155–290 (CCYWEIHSFY…ELAQRLSNRI (136 aa)) the chain is on the cytoplasmic side. The stretch at 291-301 (LWIGIANFLLC) is an intramembrane region. Residues 302–319 (PLILIWQILYAFFSYAEV) lie on the Cytoplasmic side of the membrane. Residues 320-328 (LKREPGALG) lie within the membrane without spanning it. The Cytoplasmic portion of the chain corresponds to 329-371 (ARCWSLYGRCYLRHFNELEHELQSRLNRGYKPASKYMNCFLSP). A helical transmembrane segment spans residues 372–397 (LLTLLAKNGAFFAGSILAVLIALTIY). Over 398–406 (DEDVLAVEH) the chain is Lumenal. The chain crosses the membrane as a helical span at residues 407-424 (VLTTVTLLGVTVTVCRSF). Over 425 to 470 (IPDQHMVFCPEQLLRVILAHIHYMPDHWQGNAHRSQTRDEFAQLFQ) the chain is Cytoplasmic. An intramembrane segment occupies 471 to 480 (YKAVFILEEL). At 481–483 (LSP) the chain is on the cytoplasmic side. An intramembrane segment occupies 484–492 (IVTPLILIF). Residues 493-839 (CLRPRALEII…DELPPQVHKV (347 aa)) lie on the Cytoplasmic side of the membrane. Phosphoserine is present on residues Ser656, Ser735, Ser738, Ser741, and Ser828. Disordered regions lie at residues 656 to 686 (SPLQ…SSGS) and 719 to 839 (QQAQ…VHKV). Over residues 724–736 (EPERHLWHRRESD) the composition is skewed to basic and acidic residues. Acidic residues-rich tracts occupy residues 737-747 (ESGESAPDEGG) and 823-832 (VPEEGSEDEL).

This sequence belongs to the ATG9 family. Homotrimer; forms a homotrimer with a central pore that forms a path between the two membrane leaflets. Interacts (via cytoplasmic its C-terminus) with ATG2A. Interacts with SUPT20H. Interacts (via the tyrosine-based sorting signal motif) with AP4M1; promoting association with the AP-4 complex. Interacts with ARFIP1 and ARFIP2. Interacts with PI4K2A and PI4KB. Interacts with ATG4A; the interaction is direct and promotes ATG9A trafficking. Post-translationally, ufmylated in a DDRGK1 dependent manner.

It is found in the preautophagosomal structure membrane. Its subcellular location is the cytoplasmic vesicle. The protein resides in the autophagosome membrane. The protein localises to the golgi apparatus. It localises to the trans-Golgi network membrane. It is found in the late endosome membrane. Its subcellular location is the recycling endosome membrane. The protein resides in the endoplasmic reticulum membrane. The protein localises to the mitochondrion membrane. It catalyses the reaction a 1,2-diacyl-sn-glycero-3-phosphocholine(in) = a 1,2-diacyl-sn-glycero-3-phosphocholine(out). It carries out the reaction a 1,2-diacyl-sn-glycero-3-phospho-L-serine(in) = a 1,2-diacyl-sn-glycero-3-phospho-L-serine(out). The catalysed reaction is a 1,2-diacyl-sn-glycero-3-phosphoethanolamine(in) = a 1,2-diacyl-sn-glycero-3-phosphoethanolamine(out). Phospholipid scramblase involved in autophagy by mediating autophagosomal membrane expansion. Cycles between the preautophagosomal structure/phagophore assembly site (PAS) and the cytoplasmic vesicle pool and supplies membrane for the growing autophagosome. Lipid scramblase activity plays a key role in preautophagosomal structure/phagophore assembly by distributing the phospholipids that arrive through ATG2 (ATG2A or ATG2B) from the cytoplasmic to the luminal leaflet of the bilayer, thereby driving autophagosomal membrane expansion. Also required to supply phosphatidylinositol 4-phosphate to the autophagosome initiation site by recruiting the phosphatidylinositol 4-kinase beta (PI4KB) in a process dependent on ARFIP2, but not ARFIP1. In addition to autophagy, also plays a role in necrotic cell death. This chain is Autophagy-related protein 9A, found in Pongo abelii (Sumatran orangutan).